We begin with the raw amino-acid sequence, 319 residues long: Thioredoxin reductase (319 aa).

An FAD-binding site is contributed by 37–44; it reads ERGVPGGQ. An intrachain disulfide couples Cys136 to Cys139. 279-288 is an FAD binding site; the sequence is DVRAKSLRQI.

This sequence belongs to the class-II pyridine nucleotide-disulfide oxidoreductase family. Homodimer. FAD is required as a cofactor.

Its subcellular location is the cytoplasm. It catalyses the reaction [thioredoxin]-dithiol + NADP(+) = [thioredoxin]-disulfide + NADPH + H(+). This chain is Thioredoxin reductase (trxB), found in Listeria innocua serovar 6a (strain ATCC BAA-680 / CLIP 11262).